A 421-amino-acid polypeptide reads, in one-letter code: Vasopressin V1b receptor (421 aa).

Topologically, residues 1–35 are extracellular; the sequence is MDSEPSWTATPSPGGTLFVPNTTTPWLGRDEELAK. Asn21 carries an N-linked (GlcNAc...) asparagine glycan. The helical transmembrane segment at 36 to 59 threads the bilayer; sequence VEIGILATVLVLATGGNLAVLLIL. Residues 60 to 71 are Cytoplasmic-facing; that stretch reads GLQGHKRSRMHL. A helical transmembrane segment spans residues 72-93; that stretch reads FVLHLALTDLGVALFQVLPQLL. Over 94–108 the chain is Extracellular; sequence WDITYRFQGSDLLCR. A disulfide bridge links Cys107 with Cys186. Residues 109-130 form a helical membrane-spanning segment; that stretch reads AVKYLQVLSMFASTYMLLAMTL. Residues 131-151 are Cytoplasmic-facing; that stretch reads DRYLAVCHPLRSLQQPSQSTY. The helical transmembrane segment at 152-173 threads the bilayer; sequence PLIAAPWLLAAILSLPQVFIFS. The Extracellular portion of the chain corresponds to 174 to 202; that stretch reads LREVIQGSGVLDCWADFYFSWGPRAYITW. The chain crosses the membrane as a helical span at residues 203–223; it reads TTMAIFVLPVVVLTACYGLIC. At 224–280 the chain is on the cytoplasmic side; the sequence is HEIYKNLKVKTQAGREERRGWPKSSSSAAAAATRGLPSRVSSISTISRAKIRTVKMT. The chain crosses the membrane as a helical span at residues 281–300; sequence FVIVLAYIACWAPFFSVQMW. The Extracellular segment spans residues 301-318; the sequence is SVWDENAPNEDSTNVAFT. Residues 319–338 traverse the membrane as a helical segment; that stretch reads ISMLLGNLSSCCNPWIYMGF. The Cytoplasmic portion of the chain corresponds to 339 to 421; that stretch reads NSHLLPRSLS…GEATMETSIS (83 aa). A disordered region spans residues 399 to 421; sequence KPAGSLKDLEQVDGEATMETSIS.

This sequence belongs to the G-protein coupled receptor 1 family. Vasopressin/oxytocin receptor subfamily.

Its subcellular location is the cell membrane. Functionally, receptor for arginine vasopressin. The activity of this receptor is mediated by G proteins which activate a phosphatidyl-inositol-calcium second messenger system. The chain is Vasopressin V1b receptor (Avpr1b) from Mus musculus (Mouse).